The primary structure comprises 496 residues: Legumin (496 aa).

A signal peptide spans 1 to 21 (MAKLLALSLSFCFLLFGTCFA). Cystine bridges form between cysteine 31–cysteine 64 and cysteine 107–cysteine 318. Residues 36-230 (LNALKPDNRI…ALNVNRRIVN (195 aa)) enclose the Cupin type-1 1 domain. The disordered stretch occupies residues 240-311 (EKGAIVKVKG…RGGSKSQRDN (72 aa)). Residues 257-269 (PEKEPRQKRGSRQ) show a composition bias toward basic and acidic residues. A Cupin type-1 2 domain is found at 324-453 (QNIGSSSSPD…INVCQKKLLQ (130 aa)).

It belongs to the 11S seed storage protein (globulins) family. As to quaternary structure, hexamer; each subunit is composed of an acidic and a basic chain derived from a single precursor and linked by a disulfide bond.

Seed storage protein. Alpha-amylase inhibitor. The polypeptide is Legumin (Cicer arietinum (Chickpea)).